A 137-amino-acid chain; its full sequence is Large ribosomal subunit protein uL16 (137 aa).

It belongs to the universal ribosomal protein uL16 family. As to quaternary structure, part of the 50S ribosomal subunit.

Its function is as follows. Binds 23S rRNA and is also seen to make contacts with the A and possibly P site tRNAs. The polypeptide is Large ribosomal subunit protein uL16 (Allorhizobium ampelinum (strain ATCC BAA-846 / DSM 112012 / S4) (Agrobacterium vitis (strain S4))).